Here is a 652-residue protein sequence, read N- to C-terminus: MKERMNELVQLLNQYAREYYTKDNPSVSDAEYDKLYRELVELEKEFPEDILPNSPTHRVGDLVLDGFEKYRHEYPLFSLQDAFSREELDAFDRRIKAEFPQADYLAELKIDGLSISLTYVNGRLRVGATRGDGTVGENITENLKRVRDIPLHLPENIDLTVRGECYLPKASFKTINAERRENGETEFANPRNAAAGTLRQLDTKVVAKRKLATFIYQEAGPTAASSQEAVLESFAKLGFTVNPRHIISSSMDAIWQFIEDVAKERAELAYDIDGVVIKVNSLALQEALGFTVKAPRWAIAYKFPAEEKTAEILSVDWTVGRTGVVTPTANLTPVQLAGTTVSRATLHNVDYIAEKDIRIGDIVVVYKAGDIIPAVLHVVENKRDQQVPLPIPTVCPSCQSELIHFEDEVALRCVNPRCPAQLKEKLIHFASRDAMNIIGLGPAIVEKLFTAELICDVADIYQLTPENLMQLEGIKEKSATKLYKAIQASKANSAEKLLFGLGIRHVGSKASRLLMERFESLEQLAAADFDDIAAIDGLGIVIAESLKTYFATAGAQKLLIELKTAGLNLTYLGKKTASDAALTGMTIVLTGKLANLTRSQAKEKLQSLGANVAGSVSKKTSLVIAGSDAGSKLEKAKTLGIEIKDEAWLESL.

NAD(+)-binding positions include 29-33 (DAEYD), 78-79 (SL), and Glu-107. Lys-109 acts as the N6-AMP-lysine intermediate in catalysis. Residues Arg-130, Glu-164, Lys-278, and Lys-302 each contribute to the NAD(+) site. The Zn(2+) site is built by Cys-395, Cys-398, Cys-413, and Cys-418. Positions 577-652 (ASDAALTGMT…IKDEAWLESL (76 aa)) constitute a BRCT domain.

It belongs to the NAD-dependent DNA ligase family. LigA subfamily. Mg(2+) is required as a cofactor. Requires Mn(2+) as cofactor.

It carries out the reaction NAD(+) + (deoxyribonucleotide)n-3'-hydroxyl + 5'-phospho-(deoxyribonucleotide)m = (deoxyribonucleotide)n+m + AMP + beta-nicotinamide D-nucleotide.. Its function is as follows. DNA ligase that catalyzes the formation of phosphodiester linkages between 5'-phosphoryl and 3'-hydroxyl groups in double-stranded DNA using NAD as a coenzyme and as the energy source for the reaction. It is essential for DNA replication and repair of damaged DNA. The sequence is that of DNA ligase from Streptococcus mutans serotype c (strain ATCC 700610 / UA159).